The sequence spans 429 residues: Glutamate-1-semialdehyde 2,1-aminomutase 2 (429 aa).

Position 268 is an N6-(pyridoxal phosphate)lysine (Lys-268).

This sequence belongs to the class-III pyridoxal-phosphate-dependent aminotransferase family. HemL subfamily. In terms of assembly, homodimer. Pyridoxal 5'-phosphate serves as cofactor.

Its subcellular location is the cytoplasm. The catalysed reaction is (S)-4-amino-5-oxopentanoate = 5-aminolevulinate. The protein operates within porphyrin-containing compound metabolism; protoporphyrin-IX biosynthesis; 5-aminolevulinate from L-glutamyl-tRNA(Glu): step 2/2. This Bacillus mycoides (strain KBAB4) (Bacillus weihenstephanensis) protein is Glutamate-1-semialdehyde 2,1-aminomutase 2.